The sequence spans 390 residues: DNA polymerase IV (390 aa).

One can recognise a UmuC domain in the interval 6–187 (VMHVDLDAFF…LDIAVMPGIG (182 aa)). The Mg(2+) site is built by Asp-10 and Asp-105. Glu-106 is an active-site residue.

Belongs to the DNA polymerase type-Y family. Monomer. Mg(2+) serves as cofactor.

The protein localises to the cytoplasm. The enzyme catalyses DNA(n) + a 2'-deoxyribonucleoside 5'-triphosphate = DNA(n+1) + diphosphate. In terms of biological role, poorly processive, error-prone DNA polymerase involved in untargeted mutagenesis. Copies undamaged DNA at stalled replication forks, which arise in vivo from mismatched or misaligned primer ends. These misaligned primers can be extended by PolIV. Exhibits no 3'-5' exonuclease (proofreading) activity. May be involved in translesional synthesis, in conjunction with the beta clamp from PolIII. This is DNA polymerase IV from Dehalococcoides mccartyi (strain CBDB1).